The following is a 94-amino-acid chain: Trp operon repressor homolog (94 aa).

Residues 58–81 (QREIAEKYGVSIAQITRGSNALKG) mediate DNA binding.

This sequence belongs to the TrpR family. Homodimer.

It localises to the cytoplasm. This protein is an aporepressor. When complexed with L-tryptophan it binds the operator region of the trp operon and prevents the initiation of transcription. This chain is Trp operon repressor homolog, found in Chlamydia trachomatis serovar L2 (strain ATCC VR-902B / DSM 19102 / 434/Bu).